The primary structure comprises 253 residues: Phosphoadenosine 5'-phosphosulfate reductase (253 aa).

The active-site Nucleophile; cysteine thiosulfonate intermediate is Cys-239.

It belongs to the PAPS reductase family. CysH subfamily.

It is found in the cytoplasm. It carries out the reaction [thioredoxin]-disulfide + sulfite + adenosine 3',5'-bisphosphate + 2 H(+) = [thioredoxin]-dithiol + 3'-phosphoadenylyl sulfate. The protein operates within sulfur metabolism; hydrogen sulfide biosynthesis; sulfite from sulfate: step 3/3. Its function is as follows. Catalyzes the formation of sulfite from phosphoadenosine 5'-phosphosulfate (PAPS) using thioredoxin as an electron donor. The protein is Phosphoadenosine 5'-phosphosulfate reductase of Aliivibrio fischeri (strain MJ11) (Vibrio fischeri).